The chain runs to 143 residues: Synuclein (143 aa).

Repeat copies occupy residues 20-30, 31-41, and 42-52. The tract at residues 20–78 is 5 X 11 AA tandem repeats of [EGST]-K-T-K-[EQ]-[GQ]-[VA]-X(4); the sequence is EKTKQGVQDAAEKTKQGVQDAAEKTKEGVMYVGTKTKEGVVQSVNTVTEKTKEQANVVG. Residues 53–67 form a 4; approximate repeat; sequence TKTKEGVVQSVNTVT. Repeat unit 5 spans residues 68 to 78; sequence EKTKEQANVVG. Residues 113–143 are disordered; it reads REIPAEQVAEGKQTTQEPLVEATEATEETGK.

It belongs to the synuclein family. Nervous system tissue. Found in the electric lobe, the brain and the spinal cord.

It is found in the nucleus. Functionally, may have a role in synaptic regulation or signal transduction. The polypeptide is Synuclein (Tetronarce californica (Pacific electric ray)).